We begin with the raw amino-acid sequence, 209 residues long: Orotate phosphoribosyltransferase (209 aa).

5-phospho-alpha-D-ribose 1-diphosphate is bound by residues Arg-96, Lys-100, His-102, and 122–130; that span reads EDLISTGGS. Ser-126 contacts orotate.

The protein belongs to the purine/pyrimidine phosphoribosyltransferase family. PyrE subfamily. Homodimer. It depends on Mg(2+) as a cofactor.

It carries out the reaction orotidine 5'-phosphate + diphosphate = orotate + 5-phospho-alpha-D-ribose 1-diphosphate. It participates in pyrimidine metabolism; UMP biosynthesis via de novo pathway; UMP from orotate: step 1/2. Functionally, catalyzes the transfer of a ribosyl phosphate group from 5-phosphoribose 1-diphosphate to orotate, leading to the formation of orotidine monophosphate (OMP). In Streptococcus pyogenes serotype M2 (strain MGAS10270), this protein is Orotate phosphoribosyltransferase.